We begin with the raw amino-acid sequence, 230 residues long: Lactate utilization protein C (230 aa).

Belongs to the LutC/YkgG family.

In terms of biological role, is involved in L-lactate degradation and allows cells to grow with lactate as the sole carbon source. This chain is Lactate utilization protein C, found in Exiguobacterium sp. (strain ATCC BAA-1283 / AT1b).